Consider the following 218-residue polypeptide: Histone H1 (218 aa).

Low complexity predominate over residues 1–19 (MSETAPVAAPAVSAPGAKA). 2 disordered regions span residues 1–42 (MSET…PSVT) and 89–218 (VSKG…TKKK). Position 2 is an N-acetylserine (Ser-2). An H15 domain is found at 37–110 (AGPSVTELIT…GASGSFKLNK (74 aa)). 4 stretches are compositionally biased toward basic residues: residues 118–133 (KATK…KPAA), 141–158 (KKPK…KAKK), 166–184 (KAAK…KKTA), and 191–218 (KAVK…TKKK).

The protein belongs to the histone H1/H5 family.

The protein resides in the nucleus. It is found in the chromosome. Functionally, histones H1 are necessary for the condensation of nucleosome chains into higher-order structures. The sequence is that of Histone H1 from Gallus gallus (Chicken).